A 445-amino-acid polypeptide reads, in one-letter code: UPF0210 protein SSA_2018 (445 aa).

Belongs to the UPF0210 family. Homodimer.

This is UPF0210 protein SSA_2018 from Streptococcus sanguinis (strain SK36).